Here is a 1071-residue protein sequence, read N- to C-terminus: V-type proton ATPase catalytic subunit A (1071 aa).

An N-acetylalanine modification is found at Ala-2. Phosphothreonine is present on Thr-131. An ATP-binding site is contributed by 257–264 (GAFGCGKT). The DOD-type homing endonuclease domain maps to 494 to 642 (LLGLWIGDGL…LVSLARSLGL (149 aa)). 2 positions are modified to phosphoserine: Ser-858 and Ser-928.

It belongs to the ATPase alpha/beta chains family. As to quaternary structure, V-ATPase is a heteromultimeric enzyme composed of a peripheral catalytic V1 complex (components A to H) attached to an integral membrane V0 proton pore complex (components: a, c, c', c'', d, e, f and VOA1). Interacts with RAV1 and RAV2 components of the RAVE complex, which are essential for the stability and assembly of V-ATPase. In terms of processing, this protein undergoes a protein self splicing that involves a post-translational excision of the VDE intervening region (intein) followed by peptide ligation.

The protein resides in the vacuole membrane. The catalysed reaction is ATP + H2O + 4 H(+)(in) = ADP + phosphate + 5 H(+)(out). Its function is as follows. Catalytic subunit of the V1 complex of vacuolar(H+)-ATPase (V-ATPase), a multisubunit enzyme composed of a peripheral complex (V1) that hydrolyzes ATP and a membrane integral complex (V0) that translocates protons. V-ATPase is responsible for acidifying and maintaining the pH of intracellular compartments. Functionally, PI-SceI is an endonuclease that can cleave at a site present in a VMA1 allele that lacks the derived endonuclease segment of the open reading frame; cleavage at this site only occurs during meiosis and initiates 'homing', a genetic event that converts a VMA1 allele lacking VDE into one that contains it. The protein is V-type proton ATPase catalytic subunit A of Saccharomyces cerevisiae (strain ATCC 204508 / S288c) (Baker's yeast).